The chain runs to 365 residues: Isopentenyl-diphosphate delta-isomerase (365 aa).

Residue 8–9 (RK) participates in substrate binding. Residues 67–69 (SIT), serine 97, and asparagine 126 contribute to the FMN site. 97 to 99 (SQR) contacts substrate. Glutamine 160 contacts substrate. Glutamate 161 contributes to the Mg(2+) binding site. Residues lysine 192, threonine 222, 272 to 274 (GIR), and 293 to 294 (AL) contribute to the FMN site.

This sequence belongs to the IPP isomerase type 2 family. Homooctamer. Dimer of tetramers. It depends on FMN as a cofactor. NADPH serves as cofactor. Mg(2+) is required as a cofactor.

The protein resides in the cytoplasm. The catalysed reaction is isopentenyl diphosphate = dimethylallyl diphosphate. Functionally, involved in the biosynthesis of isoprenoids. Catalyzes the 1,3-allylic rearrangement of the homoallylic substrate isopentenyl (IPP) to its allylic isomer, dimethylallyl diphosphate (DMAPP). The polypeptide is Isopentenyl-diphosphate delta-isomerase (Methanosarcina mazei (strain ATCC BAA-159 / DSM 3647 / Goe1 / Go1 / JCM 11833 / OCM 88) (Methanosarcina frisia)).